The primary structure comprises 461 residues: Methylenetetrahydrofolate--tRNA-(uracil-5-)-methyltransferase TrmFO (461 aa).

Residue 16-21 participates in FAD binding; sequence GAGLAG.

The protein belongs to the MnmG family. TrmFO subfamily. FAD is required as a cofactor.

The protein resides in the cytoplasm. The catalysed reaction is uridine(54) in tRNA + (6R)-5,10-methylene-5,6,7,8-tetrahydrofolate + NADH + H(+) = 5-methyluridine(54) in tRNA + (6S)-5,6,7,8-tetrahydrofolate + NAD(+). The enzyme catalyses uridine(54) in tRNA + (6R)-5,10-methylene-5,6,7,8-tetrahydrofolate + NADPH + H(+) = 5-methyluridine(54) in tRNA + (6S)-5,6,7,8-tetrahydrofolate + NADP(+). In terms of biological role, catalyzes the folate-dependent formation of 5-methyl-uridine at position 54 (M-5-U54) in all tRNAs. This Parasynechococcus marenigrum (strain WH8102) protein is Methylenetetrahydrofolate--tRNA-(uracil-5-)-methyltransferase TrmFO.